A 346-amino-acid chain; its full sequence is DNA primase small subunit PriS (346 aa).

Active-site residues include Asp97, Asp99, and Asp280.

This sequence belongs to the eukaryotic-type primase small subunit family. As to quaternary structure, heterodimer of a small subunit (PriS) and a large subunit (PriL). Mg(2+) serves as cofactor. Mn(2+) is required as a cofactor.

Functionally, catalytic subunit of DNA primase, an RNA polymerase that catalyzes the synthesis of short RNA molecules used as primers for DNA polymerase during DNA replication. The small subunit contains the primase catalytic core and has DNA synthesis activity on its own. Binding to the large subunit stabilizes and modulates the activity, increasing the rate of DNA synthesis while decreasing the length of the DNA fragments, and conferring RNA synthesis capability. The DNA polymerase activity may enable DNA primase to also catalyze primer extension after primer synthesis. May also play a role in DNA repair. The sequence is that of DNA primase small subunit PriS from Thermococcus kodakarensis (strain ATCC BAA-918 / JCM 12380 / KOD1) (Pyrococcus kodakaraensis (strain KOD1)).